Here is a 259-residue protein sequence, read N- to C-terminus: GTP cyclohydrolase FolE2 (259 aa).

It belongs to the GTP cyclohydrolase IV family.

It carries out the reaction GTP + H2O = 7,8-dihydroneopterin 3'-triphosphate + formate + H(+). It participates in cofactor biosynthesis; 7,8-dihydroneopterin triphosphate biosynthesis; 7,8-dihydroneopterin triphosphate from GTP: step 1/1. Converts GTP to 7,8-dihydroneopterin triphosphate. This chain is GTP cyclohydrolase FolE2, found in Nitratidesulfovibrio vulgaris (strain DSM 19637 / Miyazaki F) (Desulfovibrio vulgaris).